The sequence spans 320 residues: MARNKIALIGSGMIGGTLAHLAGLKELGDVVLFDIAEGTPQGKGLDIAESSPVDGFDAKFTGANDYAAIEGADVVIVTAGVPRKPGMSRDDLLGINLKVMEQVGAGIKKYAPEAFVICITNPLDAMVWALQKFSGLPAHKVVGMAGVLDSARFRYFLSEEFNVSVEDVTAFVLGGHGDSMVPLARYSTVAGIPLPDLVKMGWTSQDKLDKIIQRTRDGGAEIVGLLKTGSAFYAPAASAIQMAESYLKDKKRVLPVAAQLSGQYGVKDMYVGVPTVIGANGVERIIEIDLDKDEKAQFDKSVASVAGLCEACIGIAPSLK.

NAD(+) is bound by residues 10-15 and D34; that span reads GSGMIG. Residues R83 and R89 each coordinate substrate. NAD(+) is bound by residues N96 and 119–121; that span reads ITN. Positions 121 and 152 each coordinate substrate. H176 serves as the catalytic Proton acceptor.

It belongs to the LDH/MDH superfamily. MDH type 3 family.

It catalyses the reaction (S)-malate + NAD(+) = oxaloacetate + NADH + H(+). In terms of biological role, catalyzes the reversible oxidation of malate to oxaloacetate. The sequence is that of Malate dehydrogenase from Brucella melitensis biotype 2 (strain ATCC 23457).